The chain runs to 471 residues: RuvB-like protein 2 (471 aa).

An ATP-binding site is contributed by 75 to 82 (GPPSTGKT).

Belongs to the RuvB family. Probably forms a homohexamer. Interacts with RVB1 and may form heterododecamers with RVB1. Component of the SWR1 chromatin remodeling complex composed of at least ACT1, ARP4, RVB1, RVB2, ARP6, YAF9, VPS71, VPS72, SWC3, SWC4, SWC5, SWC7 and SWR1, and perhaps BDF1. Component of the chromatin-remodeling INO80 complex, at least composed of ARP4, ARP5, ARP8, RVB1, RVB2, TAF14, NHP10, IES1, IES3, IES4, IES6, ACT1, IES2, IES5 and INO80. Also belongs to the R2TP complex composed of at least RVB1, RVB2, TAH1 and PIH1. Interacts with SPT15/TBP.

It is found in the nucleus. The protein resides in the nucleoplasm. The enzyme catalyses ATP + H2O = ADP + phosphate + H(+). Its function is as follows. DNA helicase which participates in several chromatin remodeling complexes, including the SWR1 and the INO80 complexes. The SWR1 complex mediates the ATP-dependent exchange of histone H2A for the H2A variant HZT1 leading to transcriptional regulation of selected genes by chromatin remodeling. The INO80 complex remodels chromatin by shifting nucleosomes. Its ability to induce transcription of some phosphate-responsive genes is modulated by inositol polyphosphates. The INO80 complex is involved in DNA repair by associating to 'Ser-129' phosphorylated H2A histones as a response to DNA damage. During transcription may recruit SPT15/TBP to the TATA-boxes of involved genes. Required for box C/D and box H/ACA snoRNA accumulation and involved in pre-rRNA processing. The protein is RuvB-like protein 2 (RVB2) of Saccharomyces cerevisiae (strain ATCC 204508 / S288c) (Baker's yeast).